The primary structure comprises 419 residues: Tyrosine--tRNA ligase (419 aa).

Y34 lines the L-tyrosine pocket. Residues 39–48 carry the 'HIGH' region motif; the sequence is PSGDSMHIGH. L-tyrosine is bound by residues Y168 and Q172. Residues 230 to 234 carry the 'KMSKS' region motif; it reads KFGKS. K233 serves as a coordination point for ATP. In terms of domain architecture, S4 RNA-binding spans 352-418; the sequence is VNLVDWLVSL…GKKKYFLVSY (67 aa).

It belongs to the class-I aminoacyl-tRNA synthetase family. TyrS type 1 subfamily. Homodimer.

It is found in the cytoplasm. The enzyme catalyses tRNA(Tyr) + L-tyrosine + ATP = L-tyrosyl-tRNA(Tyr) + AMP + diphosphate + H(+). Catalyzes the attachment of tyrosine to tRNA(Tyr) in a two-step reaction: tyrosine is first activated by ATP to form Tyr-AMP and then transferred to the acceptor end of tRNA(Tyr). In Listeria welshimeri serovar 6b (strain ATCC 35897 / DSM 20650 / CCUG 15529 / CIP 8149 / NCTC 11857 / SLCC 5334 / V8), this protein is Tyrosine--tRNA ligase.